The sequence spans 185 residues: MGQQVLKSSNEKMEKAVAAYSRELATVRAGRANASVLDKVQVDYYGAPTPVVQLANITVPEARLLVIQPYDKTSIGDIEKAILKADLGLNPSNDGTVIRIAFPALTEERRRDLVKVVKKYAEEAKVAVRNVRRDGNDDLKKLEKAGEITEDDLRGYTEDIQKETDKYIAKVDEIAKNKEKEIMEV.

The protein belongs to the RRF family.

It localises to the cytoplasm. Functionally, responsible for the release of ribosomes from messenger RNA at the termination of protein biosynthesis. May increase the efficiency of translation by recycling ribosomes from one round of translation to another. In Bacillus cereus (strain B4264), this protein is Ribosome-recycling factor.